A 101-amino-acid chain; its full sequence is Large ribosomal subunit protein uL23 (101 aa).

This sequence belongs to the universal ribosomal protein uL23 family. Part of the 50S ribosomal subunit. Contacts protein L29, and trigger factor when it is bound to the ribosome.

Functionally, one of the early assembly proteins it binds 23S rRNA. One of the proteins that surrounds the polypeptide exit tunnel on the outside of the ribosome. Forms the main docking site for trigger factor binding to the ribosome. The polypeptide is Large ribosomal subunit protein uL23 (Rhodococcus erythropolis (strain PR4 / NBRC 100887)).